A 318-amino-acid polypeptide reads, in one-letter code: Transaldolase (318 aa).

Catalysis depends on lysine 131, which acts as the Schiff-base intermediate with substrate.

It belongs to the transaldolase family. Type 1 subfamily. In terms of assembly, homodimer.

Its subcellular location is the cytoplasm. It carries out the reaction D-sedoheptulose 7-phosphate + D-glyceraldehyde 3-phosphate = D-erythrose 4-phosphate + beta-D-fructose 6-phosphate. It functions in the pathway carbohydrate degradation; pentose phosphate pathway; D-glyceraldehyde 3-phosphate and beta-D-fructose 6-phosphate from D-ribose 5-phosphate and D-xylulose 5-phosphate (non-oxidative stage): step 2/3. Functionally, transaldolase is important for the balance of metabolites in the pentose-phosphate pathway. This chain is Transaldolase, found in Cellvibrio japonicus (strain Ueda107) (Pseudomonas fluorescens subsp. cellulosa).